Here is a 489-residue protein sequence, read N- to C-terminus: Penton protein (489 aa).

It belongs to the adenoviridae penton family. In terms of assembly, interacts with the fiber protein (via N-terminal tail region). Interacts with the capsid vertex protein; this interaction binds the penton base to neighboring peripentonal hexons.

It is found in the virion. Its subcellular location is the host nucleus. Its function is as follows. Major capsid protein that self-associates to form penton base pentamers, each in the shape of a pentagon, situated at the 12 vertices of the pseudo T=25 capsid. Involved in virus secondary attachment to host cell after initial attachment by the fiber protein, and in endocytosis of virions. As the virus enters the host cell, penton proteins are shed concomitant with virion acidification in the endosome. This chain is Penton protein, found in Murine adenovirus A serotype 1 (MAdV-1).